Reading from the N-terminus, the 743-residue chain is Tegument protein UL46 homolog (743 aa).

Disordered regions lie at residues 437 to 481 (GCPP…VSSA), 522 to 590 (HQRS…SGYM), and 693 to 743 (RVRL…VSSL). A compositionally biased stretch (low complexity) spans 526–552 (DSSSSDNSSCSSTETEYITISSTPSPT). 2 stretches are compositionally biased toward polar residues: residues 573–586 (QPAN…SPAN) and 697–716 (GTTT…TPSS). Residues 722–743 (RTLSTSESPESSPEQQERVSSL) show a composition bias toward low complexity.

This sequence belongs to the herpesviridae HHV-1 VP11/12 protein family. In terms of assembly, interacts with VP16.

It is found in the virion tegument. It localises to the host cell membrane. Its function is as follows. Abundant tegument protein. Trans-activates the immediate early genes. The sequence is that of Tegument protein UL46 homolog from Equus caballus (Horse).